Here is a 246-residue protein sequence, read N- to C-terminus: MRIDVLTLFPRMFEGPMGESIIGKAREKQLLELNVSNFRDFSDNKHQTVDDYPYGGGAGMLLKVQPIYDNLKAIEEETNQQPKRVILLDPAGKPFNQKMAEEFSQEEHLVFICGHYEGYDERIRTMVTDEVSLGDYVLTGGELGAMVMIDATVRLLPDVLGNNLSAQTDSHSTGLLEHPQYTRPAIFNDMEVPAVLTNGNHKLIAEWQLKESLRRTFLRRPDMLESVEMTPEMLKLLEEIKQEEQK.

S-adenosyl-L-methionine contacts are provided by residues Gly114 and 133–138 (LGDYVL).

This sequence belongs to the RNA methyltransferase TrmD family. Homodimer.

The protein localises to the cytoplasm. It carries out the reaction guanosine(37) in tRNA + S-adenosyl-L-methionine = N(1)-methylguanosine(37) in tRNA + S-adenosyl-L-homocysteine + H(+). In terms of biological role, specifically methylates guanosine-37 in various tRNAs. In Enterococcus faecalis (strain ATCC 700802 / V583), this protein is tRNA (guanine-N(1)-)-methyltransferase.